The chain runs to 184 residues: Ribosome-recycling factor (184 aa).

The segment covering 133–162 has biased composition (basic and acidic residues); sequence RDGMDNLKQDENKKEISEDERKRHETEVQK. The disordered stretch occupies residues 133–163; it reads RDGMDNLKQDENKKEISEDERKRHETEVQKL.

The protein belongs to the RRF family.

The protein resides in the cytoplasm. Functionally, responsible for the release of ribosomes from messenger RNA at the termination of protein biosynthesis. May increase the efficiency of translation by recycling ribosomes from one round of translation to another. The chain is Ribosome-recycling factor from Sphingopyxis alaskensis (strain DSM 13593 / LMG 18877 / RB2256) (Sphingomonas alaskensis).